Reading from the N-terminus, the 375-residue chain is Methylthioribose-1-phosphate isomerase (375 aa).

Residue D257 is the Proton donor of the active site.

The protein belongs to the eIF-2B alpha/beta/delta subunits family. MtnA subfamily.

The protein resides in the cytoplasm. Its subcellular location is the nucleus. The catalysed reaction is 5-(methylsulfanyl)-alpha-D-ribose 1-phosphate = 5-(methylsulfanyl)-D-ribulose 1-phosphate. The protein operates within amino-acid biosynthesis; L-methionine biosynthesis via salvage pathway; L-methionine from S-methyl-5-thio-alpha-D-ribose 1-phosphate: step 1/6. Functionally, catalyzes the interconversion of methylthioribose-1-phosphate (MTR-1-P) into methylthioribulose-1-phosphate (MTRu-1-P). The sequence is that of Methylthioribose-1-phosphate isomerase from Leishmania infantum.